The primary structure comprises 131 residues: D-ribose pyranase (131 aa).

The active-site Proton donor is H20. Residues D28, H98, and 120 to 122 (YAN) each bind substrate.

It belongs to the RbsD / FucU family. RbsD subfamily. In terms of assembly, homodecamer.

The protein resides in the cytoplasm. It carries out the reaction beta-D-ribopyranose = beta-D-ribofuranose. Its pathway is carbohydrate metabolism; D-ribose degradation; D-ribose 5-phosphate from beta-D-ribopyranose: step 1/2. In terms of biological role, catalyzes the interconversion of beta-pyran and beta-furan forms of D-ribose. The sequence is that of D-ribose pyranase from Bacillus cereus (strain ZK / E33L).